Here is a 446-residue protein sequence, read N- to C-terminus: MVLGCPKREAVKEFGVQCLKQENVCPIITSRNQTHTHTHITISSSLTLHNGGLSLQKIIMGKTSKWFRSLLTGKKERTKEHIIQSECVFTSSIPGTPKEKRRWSFRRSSATGPPPPACAITLKDSPPPPPPPPPPPPLQQPFVVEIVDNEDEQIKNVSAEEIEEFAAIKIQACYRSHLARKALRALKGLVKLQALVRGHLVRKQATATLRCMQALITLQAKAREQRIRMIGGDSTNPRTSIHKTRINNFYHENEENIKIVEMDIQSKMYSPAPSALTEMSPRAYSSHFEDCNSFNTAQSSPQCFSRFKEYYNGDTLSSYDYPLFPNYMANTQSSKAKARSQSAPKQRPPEIYEKQMSGRRRSSMEAPRNNGVPRAVRMQRSSSQLGSNTAKESQQHHHHQYYPWMAIKLDRSNISLMESECGSTSTVMTNTNYGRHVDVQGNNNMY.

Positions I93–Q140 are disordered. The span at S125–Q139 shows a compositional bias: pro residues. IQ domains lie at E163 to K191 and L192 to A214. The calmodulin-binding stretch occupies residues A214–G231. Residues Q332–K345 are compositionally biased toward low complexity. Residues Q332 to H398 are disordered. Residues Q379–E392 are compositionally biased toward polar residues.

It belongs to the IQD family. In terms of assembly, binds to multiple calmodulin (CaM) in the presence of Ca(2+) and CaM-like proteins.

It localises to the cytoplasm. It is found in the cytoskeleton. The protein resides in the cell membrane. May be involved in cooperative interactions with calmodulins or calmodulin-like proteins. Recruits calmodulin proteins to microtubules, thus being a potential scaffold in cellular signaling and trafficking. Acts as a positive regulator of trichome branch initiation. May associate with nucleic acids and regulate gene expression at the transcriptional or post-transcriptional level. The chain is Protein IQ-DOMAIN 19 from Arabidopsis thaliana (Mouse-ear cress).